The following is a 511-amino-acid chain: Ribonuclease Y (511 aa).

The chain crosses the membrane as a helical span at residues 3–23; sequence VGILIGIIILGVVGFIQYTLI. One can recognise a KH domain in the interval 201–286; the sequence is TVHVVALPND…EMVERAIKDV (86 aa). Residues 327-420 form the HD domain; the sequence is VLKHSIEVSY…VQAADAISAA (94 aa).

It belongs to the RNase Y family.

The protein resides in the cell membrane. Its function is as follows. Endoribonuclease that initiates mRNA decay. In Clostridium perfringens (strain SM101 / Type A), this protein is Ribonuclease Y.